Here is an 879-residue protein sequence, read N- to C-terminus: Valine--tRNA ligase (879 aa).

The 'HIGH' region signature appears at 43–53; sequence PNVTGVLHMGH. A 'KMSKS' region motif is present at residues 534–538; sequence KMSKS. K537 provides a ligand contact to ATP. A coiled-coil region spans residues 807-878; the sequence is LGNMIDVEAE…LKESIAALKK (72 aa).

The protein belongs to the class-I aminoacyl-tRNA synthetase family. ValS type 1 subfamily. In terms of assembly, monomer.

The protein localises to the cytoplasm. It catalyses the reaction tRNA(Val) + L-valine + ATP = L-valyl-tRNA(Val) + AMP + diphosphate. Functionally, catalyzes the attachment of valine to tRNA(Val). As ValRS can inadvertently accommodate and process structurally similar amino acids such as threonine, to avoid such errors, it has a 'posttransfer' editing activity that hydrolyzes mischarged Thr-tRNA(Val) in a tRNA-dependent manner. The sequence is that of Valine--tRNA ligase from Bacteroides thetaiotaomicron (strain ATCC 29148 / DSM 2079 / JCM 5827 / CCUG 10774 / NCTC 10582 / VPI-5482 / E50).